The following is a 62-amino-acid chain: Large ribosomal subunit protein uL29 (62 aa).

Belongs to the universal ribosomal protein uL29 family.

The polypeptide is Large ribosomal subunit protein uL29 (Cytophaga hutchinsonii (strain ATCC 33406 / DSM 1761 / CIP 103989 / NBRC 15051 / NCIMB 9469 / D465)).